Here is a 366-residue protein sequence, read N- to C-terminus: G kinase-anchoring protein 1 (366 aa).

Residues M1 to D95 are interaction with IRS1. Disordered stretches follow at residues Q20 to N110 and E147 to L177. S23, S25, and S27 each carry phosphoserine. The segment covering T39 to T50 has biased composition (polar residues). Residues S47–A77 are a coiled coil. S106 carries the post-translational modification Phosphoserine; by PKG. 2 coiled-coil regions span residues A128–V160 and E243–G353.

It belongs to the GKAP1 family. As to quaternary structure, interacts with PRKG1 and IRS1.

It localises to the golgi apparatus. In terms of biological role, regulates insulin-dependent IRS1 tyrosine phosphorylation in adipocytes by modulating the availability of IRS1 to IR tyrosine kinase. Its association with IRS1 is required for insulin-induced translocation of SLC2A4 to the cell membrane. Involved in TNF-induced impairment of insulin-dependent IRS1 tyrosine phosphorylation. The sequence is that of G kinase-anchoring protein 1 (GKAP1) from Homo sapiens (Human).